The chain runs to 449 residues: Hyaluronidase (449 aa).

The N-terminal stretch at 1–23 is a signal peptide; the sequence is MYHLWIKCLAAWIFLKRFNGVHV. Intrachain disulfides connect C47/C340 and C211/C227. N-linked (GlcNAc...) asparagine glycosylation is found at N67, N103, and N111. E135 (proton donor) is an active-site residue. N-linked (GlcNAc...) asparagine glycosylation occurs at N153. N-linked (GlcNAc...) asparagine glycosylation occurs at N357. 3 disulfides stabilise this stretch: C365–C376, C370–C427, and C429–C438. N-linked (GlcNAc...) asparagine glycosylation occurs at N401. The EGF-like domain maps to 427–438; sequence CQCYQGWKGLYC.

Belongs to the glycosyl hydrolase 56 family. Monomer. As to expression, expressed by the venom gland.

The protein resides in the secreted. The catalysed reaction is Random hydrolysis of (1-&gt;4)-linkages between N-acetyl-beta-D-glucosamine and D-glucuronate residues in hyaluronate.. In terms of biological role, snake venom endo-hyaluronidase that degrades hyaluronan to smaller oligosaccharide fragments. In venom, it is not toxic by itself, but increases the diffusion of other venom proteins by degrading the extracellular matrix. In addition, it displays antiedematogenic activity. This Crotalus adamanteus (Eastern diamondback rattlesnake) protein is Hyaluronidase.